A 296-amino-acid chain; its full sequence is MAATVIDGKAFAARIRGQVAEHVAELKAGHGITPGLAVVLVGEDPASQVYVRSKGKQTVEVGMNSYEHKLDADTSEADLLALIDRLNGDPDVHGILVQLPLPGHLDEDLVINAIDPAKDVDGFHISNVGLLGTGQKSMVPCTPLGCLMMLRDHHGSLSGMDAVVIGRSNIVGKPMAQLLLGDSCTVTIAHSRTKDLADVVRRADIVVAAVGRPEMVPGDWIKPGATVIDVGINRIERDGKTRLVGDVHYDSCAQVAGAITPVPGGVGPMTIACLLANTLTACTRANKLTEPDGLTP.

NADP(+) is bound by residues 166–168 (GRS), Ser191, and Ile232.

This sequence belongs to the tetrahydrofolate dehydrogenase/cyclohydrolase family. As to quaternary structure, homodimer.

The enzyme catalyses (6R)-5,10-methylene-5,6,7,8-tetrahydrofolate + NADP(+) = (6R)-5,10-methenyltetrahydrofolate + NADPH. It catalyses the reaction (6R)-5,10-methenyltetrahydrofolate + H2O = (6R)-10-formyltetrahydrofolate + H(+). It participates in one-carbon metabolism; tetrahydrofolate interconversion. Catalyzes the oxidation of 5,10-methylenetetrahydrofolate to 5,10-methenyltetrahydrofolate and then the hydrolysis of 5,10-methenyltetrahydrofolate to 10-formyltetrahydrofolate. The protein is Bifunctional protein FolD 1/3 of Ruegeria pomeroyi (strain ATCC 700808 / DSM 15171 / DSS-3) (Silicibacter pomeroyi).